The primary structure comprises 313 residues: Porphobilinogen deaminase (313 aa).

Cys242 carries the S-(dipyrrolylmethanemethyl)cysteine modification.

It belongs to the HMBS family. In terms of assembly, monomer. The cofactor is dipyrromethane.

It catalyses the reaction 4 porphobilinogen + H2O = hydroxymethylbilane + 4 NH4(+). It participates in porphyrin-containing compound metabolism; protoporphyrin-IX biosynthesis; coproporphyrinogen-III from 5-aminolevulinate: step 2/4. In terms of biological role, tetrapolymerization of the monopyrrole PBG into the hydroxymethylbilane pre-uroporphyrinogen in several discrete steps. In Proteus mirabilis, this protein is Porphobilinogen deaminase (hemC).